We begin with the raw amino-acid sequence, 595 residues long: DNA polymerase (595 aa).

The 3'-5' exonuclease domain occupies 1–212; the sequence is MIELRHEVQG…CKSLTPLVPD (212 aa). Residues 213–595 are polymerase; it reads VSRSLVPYEH…SWGSLYGADY (383 aa).

This sequence belongs to the DNA polymerase type-A family.

It carries out the reaction DNA(n) + a 2'-deoxyribonucleoside 5'-triphosphate = DNA(n+1) + diphosphate. Replicates viral genomic DNA. This polymerase possesses two enzymatic activities: DNA synthesis (polymerase) and an exonucleolytic activity that degrades single-stranded DNA in the 3'-5' direction. This is DNA polymerase (44) from Mycobacterium phage L5 (Mycobacteriophage L5).